Consider the following 208-residue polypeptide: MAGIKVFGHPASTATRRVLIALHEKNVDFEFVHVELKDGEHKKEPFILRNPFGKVPAFEDGDFKIFESRAITQYIAHEFSDKGNNLLSTGKDMAIIAMGIEIESHEFDPVGSKLVWEQVLKPLYGMTTDKTVVEEEEAKLAKVLDVYEHRLGESKYLASDHFTLVDLHTIPVIQYLLGTPTKKLFDERPHVSAWVADITSRPSAQKVL.

The GST N-terminal domain maps to 2–83; sequence AGIKVFGHPA…YIAHEFSDKG (82 aa). Glutathione-binding positions include 12–13, 41–42, 54–55, and 67–68; these read ST, HK, KV, and ES. The 120-residue stretch at 89–208 folds into the GST C-terminal domain; that stretch reads TGKDMAIIAM…TSRPSAQKVL (120 aa).

The protein belongs to the GST superfamily. Phi family.

It localises to the cytoplasm. It is found in the cytosol. The enzyme catalyses RX + glutathione = an S-substituted glutathione + a halide anion + H(+). Its function is as follows. Involved in camalexin biosynthesis by probably catalyzing the conjugation of GSH with indole-3-acetonitrile (IAN). May be involved in the conjugation of reduced glutathione to a wide number of exogenous and endogenous hydrophobic electrophiles and have a detoxification role against certain herbicides. This is Glutathione S-transferase F6 (GSTF6) from Arabidopsis thaliana (Mouse-ear cress).